The chain runs to 356 residues: Protein-glutamate methylesterase/protein-glutamine glutaminase 2 (356 aa).

A Response regulatory domain is found at 7 to 124 (KVLCVDDSAL…RDGLMEYTDT (118 aa)). Asp58 is modified (4-aspartylphosphate). In terms of domain architecture, CheB-type methylesterase spans 157–349 (LLSTEKLIIL…QRVMARLATY (193 aa)). Active-site residues include Ser169, His195, and Asp291.

The protein belongs to the CheB family. Phosphorylated by CheA. Phosphorylation of the N-terminal regulatory domain activates the methylesterase activity.

It is found in the cytoplasm. The enzyme catalyses [protein]-L-glutamate 5-O-methyl ester + H2O = L-glutamyl-[protein] + methanol + H(+). The catalysed reaction is L-glutaminyl-[protein] + H2O = L-glutamyl-[protein] + NH4(+). Functionally, involved in chemotaxis. Part of a chemotaxis signal transduction system that modulates chemotaxis in response to various stimuli. Catalyzes the demethylation of specific methylglutamate residues introduced into the chemoreceptors (methyl-accepting chemotaxis proteins or MCP) by CheR. Also mediates the irreversible deamidation of specific glutamine residues to glutamic acid. The protein is Protein-glutamate methylesterase/protein-glutamine glutaminase 2 of Cupriavidus pinatubonensis (strain JMP 134 / LMG 1197) (Cupriavidus necator (strain JMP 134)).